A 323-amino-acid polypeptide reads, in one-letter code: Transmembrane protein 171 (323 aa).

4 consecutive transmembrane segments (helical) span residues 22–42 (IFFL…ISIF), 57–77 (MVLK…VILA), 112–132 (LIFG…GIWV), and 159–179 (FLSL…FFVV). The segment covering 251–268 (YSSLFNLSRTPTPENQGA) has biased composition (polar residues). The interval 251-323 (YSSLFNLSRT…LGAPSESSPP (73 aa)) is disordered. Residues 281-290 (SGPGSSSESS) show a composition bias toward low complexity.

It is found in the membrane. This is Transmembrane protein 171 (Tmem171) from Rattus norvegicus (Rat).